Here is a 628-residue protein sequence, read N- to C-terminus: Beta-lactamase-like protein 1 (628 aa).

A signal peptide spans 1-28 (MKNILSFSFSFSFLYILFLLLFLNNNLL). 4 N-linked (GlcNAc...) asparagine glycosylation sites follow: Asn-45, Asn-68, Asn-198, and Asn-241. The segment covering 245-281 (NNNNNNNNNNNNNNNNNNNNNNNNNNNNNNNNNNNNN) has biased composition (low complexity). Residues 245–285 (NNNNNNNNNNNNNNNNNNNNNNNNNNNNNNNNNNNNNKIKT) are disordered. Residues Asn-313 and Asn-335 are each glycosylated (N-linked (GlcNAc...) asparagine). The tract at residues 494 to 516 (EKEEKEEEEENQQDESQQQQQQQ) is disordered. Acidic residues predominate over residues 496-506 (EEKEEEEENQQ). The span at 507–516 (DESQQQQQQQ) shows a compositional bias: low complexity.

Belongs to the beta-lactamase family.

The protein localises to the secreted. The protein is Beta-lactamase-like protein 1 of Dictyostelium discoideum (Social amoeba).